We begin with the raw amino-acid sequence, 99 residues long: Large ribosomal subunit protein bL21 (99 aa).

This sequence belongs to the bacterial ribosomal protein bL21 family. In terms of assembly, part of the 50S ribosomal subunit. Contacts protein L20.

In terms of biological role, this protein binds to 23S rRNA in the presence of protein L20. This is Large ribosomal subunit protein bL21 from Mycoplasma mobile (strain ATCC 43663 / 163K / NCTC 11711) (Mesomycoplasma mobile).